A 1298-amino-acid chain; its full sequence is MDINNNIDNITNSNNNIEKNNNINNFDNNNNNNNILYISSSESNNNNNINSSNSSSNNTNNSNNSSISNNNNNNNNNNNNNNNISIEGNTANNSDIKVGTSLTNSIKSFKKLFNNQKSNNNNNNLQVNHFQQSQSLPPSSNTSPTFSSTSPIIIVSDNTNIESLDLEINSNNSGSIGSNNSGDNNNINMNYKSKSLSLNYSILRPLCDTDNISNNNNNNNNNSNNSNNNNNMSSSDNNNNSNSNNTTNGGQLKRNNSSNNNNRYSIGGPLKMSNSSDFNDYLLNNNILYNINQPNRKTPPPNLMSVLKNSFTQYTPPSTTLTSPTSTRNPNRLSTNLSNVTNISSSTSSSSSSLNANNNTNNNNQQLQQQQQQQQQQQLQQQQQLTKSYSVSNLMRSQSSSSSSQSPLIQQSDQVTFDYDYIYRRFLRSRSELTLPSWDNAQYEGDFDTEIQDTLTRALSNGNLPSDNKRQSLHLSTESTTSNNNNNNNNNNNNNNNNNNNKSKTDDTTNSATTTTTTTTTTTTTTTTNSTTTTTQLNNGKNLIGLVYNDKDEVIAGERDKIIGLFTDISKVTGTQFLEEFLFTYHYYMTSVDLLENLKGRFNNPLMDQAAQSISILEENHDKVKIEQLSTHIRLRVINVIKKWIENHGYAFATDINLYQMLVDFIDGDVMSFSQRWGQYLKKAINDSGCLLRYIAVNVKEASSKQLREIISLDNLDAISKLMSQSLQLKERKKGLKVIKNSFTGNEAVEWLINKFNLDSKDEALETLSKMLQSNLIFHHSKSGSSFSPSSSSSSTTTTTTTSSSSSSSNTTTANMASSSSATDNSSSGGVVTSSSSSSSSSSSSPSNGNGTTAITSTSLPNSISSSNSTSILTSLVVNSNSSGIANGSSTPSIPSSVTSPLTNSKSTLNSTPSSSSNSFTFKDKSTSIYYFIFENINFPEPIVPKTFFSSPNSTFSITFLDIHPVEIARQLTLIDYELFKKLSPTDFYHTAWSKPDAKEKVPNLINFINRSNTVSYWVATEILSSSNIKHRVSVLKRFITIAEILRKFHNWNTLTGILMGLNLGSIQRLKKTWESIDKKQLDSLQNLINLTSERLNYSNYRKEMSTPTYPCLPFMAVYLKDLYFIEENPDYLENGYINFEKMKMISKVLIEIKRYQTEQYWLKKIDAIENILKSVVLTDKDLYKASHMIEQPQRTMTVGSNLKAQSFLTTTTTTTTTNNLNNNNNNNNPNNNNNNNNNSANNKSSPSPSPSSSPITSSPISSLTINNNNTISSNLSASTDSSINTKKKSSFLMFGKK.

Disordered stretches follow at residues 1–26 (MDINNNIDNITNSNNNIEKNNNINNF), 46–88 (NNNI…SIEG), 211–271 (NISN…GPLK), 314–384 (YTPP…QQQQ), and 459–533 (LSNG…STTT). Low complexity-rich tracts occupy residues 211 to 245 (NISNNNNNNNNNSNNSNNNNNMSSSDNNNNSNSNN) and 315 to 384 (TPPS…QQQQ). A coiled-coil region spans residues 352 to 389 (SSLNANNNTNNNNQQLQQQQQQQQQQQLQQQQQLTKSY). Over residues 473-482 (LHLSTESTTS) the composition is skewed to polar residues. Low complexity-rich tracts occupy residues 483 to 501 (NNNNNNNNNNNNNNNNNNN) and 508 to 533 (TTNSATTTTTTTTTTTTTTTTNSTTT). The 140-residue stretch at 550-689 (DKDEVIAGER…YLKKAINDSG (140 aa)) folds into the N-terminal Ras-GEF domain. Residues 723–801 (MSQSLQLKER…SSSSTTTTTT (79 aa)) form the DEP domain. 2 disordered regions span residues 781–864 (SKSG…PNSI) and 884–920 (GIANGSSTPSIPSSVTSPLTNSKSTLNSTPSSSSNSF). The segment covering 783–864 (SGSSFSPSSS…ITSTSLPNSI (82 aa)) has biased composition (low complexity). The Ras-GEF domain occupies 964 to 1193 (HPVEIARQLT…YKASHMIEQP (230 aa)). Positions 1214 to 1267 (TTTTTNNLNNNNNNNNPNNNNNNNNNSANNKSSPSPSPSSSPITSSPISSLTIN) are disordered.

In terms of biological role, promotes the exchange of Ras-bound GDP by GTP. Seems to play a role in chemotaxis. The polypeptide is Ras guanine nucleotide exchange factor Q (gefQ) (Dictyostelium discoideum (Social amoeba)).